Here is a 797-residue protein sequence, read N- to C-terminus: Short transient receptor potential channel 4-associated protein (797 aa).

At Ala2 the chain carries N-acetylalanine. Residues 2–400 form an interaction with TNFRSF1A region; that stretch reads AAAPVAAGSG…VLYVLCVLLM (399 aa).

In terms of assembly, component of the DCX(TRPC4AP) E3 ubiquitin ligase complex, at least composed of CUL4A, DDB1, TRPC4AP/TRUSS and RBX1. Interacts with MYC. Constitutively associated with TNFRSF1A. Directly interacts with TRADD, TRAF2, CHUK, IKBKB and IKBKG. Interacts with TRPC1, TRPC4 and TRPC5. As to quaternary structure, (Microbial infection) Interacts with Hepatitis B virus (HBV) protein X; leading to prevent ubiquitination of TRPC4AP by SKP2. Post-translationally, phosphorylated by GSK3B; phosphorylation is required for ubiquitination. In terms of processing, ubiquitinated by a SCF (SKP1-CUL1-F-box protein) E3 ubiquitin-protein ligase containing SKP2, leading to its degradation. Phosphorylation by GSK3B is required for ubiquitination.

Its subcellular location is the cytoplasm. The protein resides in the perinuclear region. It participates in protein modification; protein ubiquitination. Functionally, substrate-recognition component of a DCX (DDB1-CUL4-X-box) E3 ubiquitin-protein ligase complex required for cell cycle control. The DCX(TRPC4AP) complex specifically mediates the polyubiquitination and subsequent degradation of MYC as part of the DesCEND (destruction via C-end degrons) pathway. The DesCEND (destruction via C-end degrons) pathway recognizes a C-degron located at the extreme C terminus of target proteins, leading to their ubiquitination and degradation. The DCX(TRPC4AP) complex specifically recognizes proteins with an arginine at the minus 3 position (R-3 motif) at the C-terminus, such as MYC, leading to their ubiquitination and degradation. Also participates in the activation of NFKB1 in response to ligation of TNFRSF1A, possibly by linking TNFRSF1A to the IKK signalosome. Involved in JNK activation via its interaction with TRAF2. Also involved in elevation of endoplasmic reticulum Ca(2+) storage reduction in response to CHRM1. The chain is Short transient receptor potential channel 4-associated protein from Homo sapiens (Human).